A 363-amino-acid polypeptide reads, in one-letter code: 3-isopropylmalate dehydrogenase (363 aa).

An NAD(+)-binding site is contributed by 78–91 (GPKWEHLPPAEQPE). R99, R109, R138, and D227 together coordinate substrate. Residues D227, D251, and D255 each coordinate Mg(2+). 285 to 297 (GSAPDIAGKDIAN) provides a ligand contact to NAD(+).

This sequence belongs to the isocitrate and isopropylmalate dehydrogenases family. LeuB type 1 subfamily. As to quaternary structure, homodimer. It depends on Mg(2+) as a cofactor. Mn(2+) is required as a cofactor.

The protein resides in the cytoplasm. The catalysed reaction is (2R,3S)-3-isopropylmalate + NAD(+) = 4-methyl-2-oxopentanoate + CO2 + NADH. It participates in amino-acid biosynthesis; L-leucine biosynthesis; L-leucine from 3-methyl-2-oxobutanoate: step 3/4. In terms of biological role, catalyzes the oxidation of 3-carboxy-2-hydroxy-4-methylpentanoate (3-isopropylmalate) to 3-carboxy-4-methyl-2-oxopentanoate. The product decarboxylates to 4-methyl-2 oxopentanoate. The sequence is that of 3-isopropylmalate dehydrogenase from Pectobacterium atrosepticum (strain SCRI 1043 / ATCC BAA-672) (Erwinia carotovora subsp. atroseptica).